We begin with the raw amino-acid sequence, 54 residues long: uncharacterized protein (54 aa).

Positions 34–54 (NNREKQKSGKLRELRRGFKTF) are disordered.

This is an uncharacterized protein from Acidianus two-tailed virus (ATV).